The sequence spans 575 residues: V-type ATP synthase alpha chain (575 aa).

Residue 238-245 (GPFGAGKT) participates in ATP binding.

The protein belongs to the ATPase alpha/beta chains family.

The enzyme catalyses ATP + H2O + 4 H(+)(in) = ADP + phosphate + 5 H(+)(out). Its function is as follows. Produces ATP from ADP in the presence of a proton gradient across the membrane. The V-type alpha chain is a catalytic subunit. This Borreliella burgdorferi (strain ATCC 35210 / DSM 4680 / CIP 102532 / B31) (Borrelia burgdorferi) protein is V-type ATP synthase alpha chain (atpA).